The sequence spans 376 residues: Probable transcription factor At1g61730 (376 aa).

The segment at 1–150 (MTKKLNPLED…RVKKDEESVK (150 aa)) is disordered. The span at 17-40 (SDEDDVETSEAGEASDDSSSSEED) shows a compositional bias: acidic residues. Ser-49 bears the Phosphoserine mark. The span at 49–72 (SPSATTAAAPPAKSTAVSTAADSD) shows a compositional bias: low complexity. Over residues 73 to 83 (SGSETETDSDS) the composition is skewed to acidic residues. A compositionally biased stretch (polar residues) spans 87–103 (NPPNSGSGKTIALNTVN).

It belongs to the GeBP family. Interacts with DEK3.

The sequence is that of Probable transcription factor At1g61730 from Arabidopsis thaliana (Mouse-ear cress).